The chain runs to 397 residues: Cysteine protease ATG4A (397 aa).

Cys-79 functions as the Nucleophile in the catalytic mechanism. Residues Asp-279 and His-281 contribute to the active site. The short motif at 392-395 is the LIR element; it reads FEIL.

The protein belongs to the peptidase C54 family.

The protein localises to the cytoplasm. It carries out the reaction [protein]-C-terminal L-amino acid-glycyl-phosphatidylethanolamide + H2O = [protein]-C-terminal L-amino acid-glycine + a 1,2-diacyl-sn-glycero-3-phosphoethanolamine. In terms of biological role, cysteine protease that plays a key role in autophagy by mediating both proteolytic activation and delipidation of ATG8 family proteins. The protease activity is required for proteolytic activation of ATG8 family proteins: cleaves the C-terminal amino acid of ATG8 proteins to reveal a C-terminal glycine. Exposure of the glycine at the C-terminus is essential for ATG8 proteins conjugation to phosphatidylethanolamine (PE) and insertion to membranes, which is necessary for autophagy. Protease activity is also required to counteract formation of high-molecular weight conjugates of ATG8 proteins (ATG8ylation): acts as a deubiquitinating-like enzyme that removes ATG8 conjugated to other proteins, such as ATG3. In addition to the protease activity, also mediates delipidation of ATG8 family proteins. Catalyzes delipidation of PE-conjugated forms of ATG8 proteins during macroautophagy. The protein is Cysteine protease ATG4A of Xenopus laevis (African clawed frog).